A 146-amino-acid polypeptide reads, in one-letter code: Hemoglobin subunit beta-1/2 (146 aa).

At Val-1 the chain carries N-acetylvaline. In terms of domain architecture, Globin spans His-2–His-146. Thr-12 is subject to Phosphothreonine. Position 59 is an N6-acetyllysine (Lys-59). Heme b is bound at residue His-63. Lys-82 bears the N6-acetyllysine mark. Residue His-92 participates in heme b binding. Cys-93 is subject to S-nitrosocysteine. Lys-144 bears the N6-acetyllysine mark.

It belongs to the globin family. In terms of assembly, heterotetramer of two alpha chains and two beta chains. As to expression, red blood cells.

Its function is as follows. Involved in oxygen transport from the lung to the various peripheral tissues. This is Hemoglobin subunit beta-1/2 (HBB) from Physeter macrocephalus (Sperm whale).